The chain runs to 69 residues: NADH dehydrogenase [ubiquinone] 1 beta subcomplex subunit 2 (69 aa).

The protein belongs to the complex I NDUFB2 subunit family. In terms of assembly, complex I is composed of at least 49 different subunits.

Its subcellular location is the mitochondrion inner membrane. Its function is as follows. Accessory subunit of the mitochondrial membrane respiratory chain NADH dehydrogenase (Complex I), that is believed not to be involved in catalysis. Complex I functions in the transfer of electrons from NADH to the respiratory chain. The immediate electron acceptor for the enzyme is believed to be ubiquinone. The chain is NADH dehydrogenase [ubiquinone] 1 beta subcomplex subunit 2 from Arabidopsis thaliana (Mouse-ear cress).